The chain runs to 392 residues: Speckle-type POZ protein-like (392 aa).

Residues 31–161 form the MATH domain; it reads KFSYMWTINN…DDKLTLFCEV (131 aa). Positions 200 to 267 constitute a BTB domain; sequence TDCCFFVRGK…VYTGKAPNLD (68 aa).

It belongs to the Tdpoz family. Homodimer. Heterodimer with SPOP. Component of cullin-RING-based BCR (BTB-CUL3-RBX1) E3 ubiquitin-protein ligase complexes containing homodimeric SPOPL or the heterodimer formed by SPOP and SPOPL. Interacts with CUL3 and MACROH2A1.

It localises to the nucleus. It participates in protein modification; protein ubiquitination. Functionally, component of a cullin-RING-based BCR (BTB-CUL3-RBX1) E3 ubiquitin-protein ligase complex that mediates the ubiquitination and subsequent proteasomal degradation of target proteins, but with relatively low efficiency. Cullin-RING-based BCR (BTB-CUL3-RBX1) E3 ubiquitin-protein ligase complexes containing homodimeric SPOPL or the heterodimer formed by SPOP and SPOPL are less efficient than ubiquitin ligase complexes containing only SPOP. May function to down-regulate the activity of cullin-RING-based BCR (BTB-CUL3-RBX1) E3 ubiquitin-protein ligase complexes that contain SPOP. This is Speckle-type POZ protein-like (Spopl) from Mus musculus (Mouse).